Here is a 64-residue protein sequence, read N- to C-terminus: uncharacterized protein (64 aa).

Over residues 1-14 (MFNFDPTDQPTDQH) the composition is skewed to polar residues. Residues 1–42 (MFNFDPTDQPTDQHLLQLPTDPHPLQQPIDPHPPPQPNNNLP) form a disordered region.

This is an uncharacterized protein from Dictyostelium discoideum (Social amoeba).